Here is a 238-residue protein sequence, read N- to C-terminus: tRNA1(Val) (adenine(37)-N6)-methyltransferase (238 aa).

The protein belongs to the methyltransferase superfamily. tRNA (adenine-N(6)-)-methyltransferase family.

The protein localises to the cytoplasm. The catalysed reaction is adenosine(37) in tRNA1(Val) + S-adenosyl-L-methionine = N(6)-methyladenosine(37) in tRNA1(Val) + S-adenosyl-L-homocysteine + H(+). In terms of biological role, specifically methylates the adenine in position 37 of tRNA(1)(Val) (anticodon cmo5UAC). The polypeptide is tRNA1(Val) (adenine(37)-N6)-methyltransferase (Shewanella baltica (strain OS223)).